Reading from the N-terminus, the 197-residue chain is Holliday junction branch migration complex subunit RuvA (197 aa).

A domain I region spans residues 1-63; the sequence is MISSLRGEVL…EDSMTLYGFV (63 aa). The segment at 64-139 is domain II; it reads DGETRDLFLT…KVGPAGSAAT (76 aa). The flexible linker stretch occupies residues 139–143; the sequence is TAPAV. Residues 144-197 form a domain III region; sequence NGHTVRAPVVEALVGLGFAAKQAEEATDKVLAGDGEATTSSALRAALSLLGKAR.

Belongs to the RuvA family. In terms of assembly, homotetramer. Forms an RuvA(8)-RuvB(12)-Holliday junction (HJ) complex. HJ DNA is sandwiched between 2 RuvA tetramers; dsDNA enters through RuvA and exits via RuvB. An RuvB hexamer assembles on each DNA strand where it exits the tetramer. Each RuvB hexamer is contacted by two RuvA subunits (via domain III) on 2 adjacent RuvB subunits; this complex drives branch migration. In the full resolvosome a probable DNA-RuvA(4)-RuvB(12)-RuvC(2) complex forms which resolves the HJ.

It localises to the cytoplasm. In terms of biological role, the RuvA-RuvB-RuvC complex processes Holliday junction (HJ) DNA during genetic recombination and DNA repair, while the RuvA-RuvB complex plays an important role in the rescue of blocked DNA replication forks via replication fork reversal (RFR). RuvA specifically binds to HJ cruciform DNA, conferring on it an open structure. The RuvB hexamer acts as an ATP-dependent pump, pulling dsDNA into and through the RuvAB complex. HJ branch migration allows RuvC to scan DNA until it finds its consensus sequence, where it cleaves and resolves the cruciform DNA. This is Holliday junction branch migration complex subunit RuvA from Mycobacterium marinum (strain ATCC BAA-535 / M).